Here is a 509-residue protein sequence, read N- to C-terminus: Probable Xaa-Pro aminopeptidase MAC_04092 (509 aa).

Asp-273, Asp-284, Glu-437, and Glu-478 together coordinate Mn(2+).

The protein belongs to the peptidase M24B family. The cofactor is Mn(2+).

The catalysed reaction is Release of any N-terminal amino acid, including proline, that is linked to proline, even from a dipeptide or tripeptide.. In terms of biological role, catalyzes the removal of a penultimate prolyl residue from the N-termini of peptides. This is Probable Xaa-Pro aminopeptidase MAC_04092 from Metarhizium acridum (strain CQMa 102).